An 804-amino-acid chain; its full sequence is G-type lectin S-receptor-like serine/threonine-protein kinase At1g61500 (804 aa).

Positions 1-24 (MMTRFACLHLFTMFLFTLLSGSSS) are cleaved as a signal peptide. The Bulb-type lectin domain occupies 25 to 145 (AVITTESPLS…VSERALWQSF (121 aa)). The Extracellular portion of the chain corresponds to 25 to 427 (AVITTESPLS…ELDGNKRKKT (403 aa)). N54, N135, and N237 each carry an N-linked (GlcNAc...) asparagine glycan. The region spanning 279–315 (PKKLCDFYGACGPFGLCVMSPSPMCKCFRGFVPKSVE) is the EGF-like; atypical domain. 2 cysteine pairs are disulfide-bonded: C283-C295 and C289-C303. N-linked (GlcNAc...) asparagine glycosylation is found at N321, N337, and N376. Residues 334 to 416 (CLGNSTGEDA…GELLSIRLAR (83 aa)) form the PAN domain. 2 disulfides stabilise this stretch: C369-C390 and C373-C379. The chain crosses the membrane as a helical span at residues 428-448 (IVASIVSLTLFMILGFTAFGV). Over 449-804 (WRCRVEHIAH…GMTQSVILGR (356 aa)) the chain is Cytoplasmic. Residues 491 to 776 (FSLSNKLGQG…DLPSPKQPTF (286 aa)) form the Protein kinase domain. ATP contacts are provided by residues 497 to 505 (LGQGGFGSV) and K519. S525 and S540 each carry phosphoserine. Residues 580-597 (RKRLEIDWPKRFDIIQGI) are caM-binding. D616 serves as the catalytic Proton acceptor. 2 positions are modified to phosphoserine: S620 and S633. At T650 the chain carries Phosphothreonine. A phosphoserine mark is found at S693 and S787.

This sequence belongs to the protein kinase superfamily. Ser/Thr protein kinase family.

It localises to the cell membrane. It carries out the reaction L-seryl-[protein] + ATP = O-phospho-L-seryl-[protein] + ADP + H(+). The catalysed reaction is L-threonyl-[protein] + ATP = O-phospho-L-threonyl-[protein] + ADP + H(+). The polypeptide is G-type lectin S-receptor-like serine/threonine-protein kinase At1g61500 (Arabidopsis thaliana (Mouse-ear cress)).